The chain runs to 1766 residues: MSGGAALPVSQMELHKVNEVQFEIFKERQIKSYAVCLVEHAKSYANAADQSGEASMICVWVPLTSNSACETCHRKHPECPGHFGYIELAEPVFNIGVFDLVLLVLKCVCKTCGALLLNTREQDVHKKLQHVTGLNRLRQVAKMAEAKCRVSTSTEDDMGIDGFDSAPFNGGSGMGPGATRGCGASQPRVSRFYGIYPTLVIKAVHEEQDAEWHADKVRQVLDRVSDDDARLMGFDPQRCHPRDLVLTVLPVPPPQVRPAISFGGLRSDDELTHQIMSIVKRNNQLRRDKESDVQAAIDRSRALLQEHVATYFNNASTYYKPTKVNDTKKLKSLTERLKGKYGRLRGNLMGKRVDFSARTVITGDPNIDVDEVGVPFSVAMTLTFPERVNTVNKKRLTEFARRTVYPSANYIHHPNGTITKLALLRDRSKVTLNIGDVVERHVINGDVVLFNRQPTLHRMSMMGHRVRVLNYSTFRLNLSCTTPYNADFDGDEMNLHVPQSLLTKAELIEMMMVPKNFVSPNKSAPCMGIVQDSLLGSYRLTDKDTFLDKYFVQSVALWLDLWQLPIPAILKPRPLWTGKQVFSLILPEVNHPATPQDRPPFPHNDSVVMIRRGQLLCGPITKSIVGAAPGSLIHVIFNEHGSDEVARFINGVQRVTTFFLLNFGFSVGVQDTVADSDTLRQMNDVLVKTRRNVEKIGAAANNRTLNRKAGMTLLQSFEADVNSALNKCREEAAKKALSNVRRTNSFKVMIEAGSKGTDLNICQIAVFVGQQNVAGSRIPFGFRRRTLPHFMLDDYGETSRGMANRGYVEGLKPHEFFFHTMAGREGLIDTAVKTSDTGYLQRKLIKALEDVHAAYDGTVRNANDELIQFMYGEDGLDGARIEGGQLFPLPFRDDKEMEDTYKYEYDVDGTFSGKVGGNYMDPHVRKMLRADPQNVRKLQEEYEQLTADREWSRKMLDLEDRDKLKLNLPVNPGRLIQNARSTMGKRSQVSNLSPITIIDHVRKLQEDLMKLFPSYHRGGDGYIRNTLSRERIESALTLFNVHLRQLLASKRVLKEYKLNDRAFEYLLKEIRTKYHQSLTTPGENIGAIAAQSCGEPATQMTLNTFHNAGISSKNVTLGVPRLLELLNVSRNQKHASMTVSLFPPYDEKRNAQKAQHLIEYCTLESITRRIQFIYDPDPRHTVVEADRDILELEWNVMDESDAELRIQEVVAGSPWVVRLELDVDMVTDKALDMKDVKQAILRVDESYIIETGMANNVRQRTIRMRSRYNEGADSIPKLKREIPALLARVHLRGIPGVRRALLKDTTEFTVDQATGKMSGNKIWAIDTDGTALRRAFIGVVGEDGKNIINAVKTSSNKVPEVCSLLGIEAARSKMLTELREAYLAYGLNINYRHYTILVDTICQHGYLMAVSRSGINRSDTSGPLMRCSFEETVKVLMAAASFGECDPVRGVSANLVLGNQARVGTGLFDLVLNMAALQQAVPQAEAVAPGKDVNVYHSLGSTLQQNIQSSIAYRPRDHDATPFVNNASLFLRQGFGGGSSSAPVTASAPYNPSTTYHGGRLEASAVHRSQAYSTSPALEYGGREASASQMYSVMSSASAFNPVSTRMSSVAHSYSEYSEASSYHLQHSVAPTSMQASLPRTDNSMTMQGIGSVSVPYTPHAMSSAAPPSQVYASTEVGRSHSEDSRSQSALYVPTLSPTHAGYAIRGDEPSTHRSDSNVMWREAGGGREQDEEDDLSTNYMPTAKTPQQAAPPTAAEFGDEEEEEQ.

Residues cysteine 69, cysteine 72, cysteine 79, and histidine 82 each contribute to the Zn(2+) site. Residues aspartate 487, aspartate 489, and aspartate 491 each coordinate Mg(2+). The segment at 813–825 is bridging helix; the sequence is PHEFFFHTMAGRE. Residues 1660–1766 are disordered; the sequence is HAMSSAAPPS…EFGDEEEEEQ (107 aa). Basic and acidic residues predominate over residues 1706–1716; that stretch reads RGDEPSTHRSD. Residues 1742 to 1756 are compositionally biased toward low complexity; it reads PTAKTPQQAAPPTAA.

Belongs to the RNA polymerase beta' chain family. In terms of assembly, component of the RNA polymerase II (Pol II) complex consisting of 12 subunits.

The protein resides in the nucleus. The enzyme catalyses RNA(n) + a ribonucleoside 5'-triphosphate = RNA(n+1) + diphosphate. Functionally, DNA-dependent RNA polymerase catalyzes the transcription of DNA into RNA using the four ribonucleoside triphosphates as substrates. Largest and catalytic component of RNA polymerase II which synthesizes mRNA precursors and many functional non-coding RNAs. Forms the polymerase active center together with the second largest subunit. Pol II is the central component of the basal RNA polymerase II transcription machinery. It is composed of mobile elements that move relative to each other. RPB1 is part of the core element with the central large cleft, the clamp element that moves to open and close the cleft and the jaws that are thought to grab the incoming DNA template. At the start of transcription, a single-stranded DNA template strand of the promoter is positioned within the central active site cleft of Pol II. A bridging helix emanates from RPB1 and crosses the cleft near the catalytic site and is thought to promote translocation of Pol II by acting as a ratchet that moves the RNA-DNA hybrid through the active site by switching from straight to bent conformations at each step of nucleotide addition. During transcription elongation, Pol II moves on the template as the transcript elongates. The sequence is that of DNA-directed RNA polymerase II subunit RPB1-A (TRP4.8) from Trypanosoma brucei brucei.